We begin with the raw amino-acid sequence, 62 residues long: Conotoxin Sr5.7 (62 aa).

A signal peptide spans 1 to 22; that stretch reads MRCLPVFVILLLLIASAPSVDA. A propeptide spanning residues 23 to 44 is cleaved from the precursor; that stretch reads QLKTKDDVPLASFHDNAKGTQH.

Belongs to the conotoxin T superfamily. Contains 2 disulfide bonds that can be either 'C1-C3, C2-C4' or 'C1-C4, C2-C3', since these disulfide connectivities have been observed for conotoxins with cysteine framework V (for examples, see AC P0DQQ7 and AC P81755). Expressed by the venom duct.

The protein resides in the secreted. The sequence is that of Conotoxin Sr5.7 from Conus spurius (Alphabet cone).